Here is a 383-residue protein sequence, read N- to C-terminus: Chromatin structure-remodeling complex subunit SFH1 (383 aa).

The segment at 61–80 (DDDEKVHSDNGKGEGEEVGH) is disordered. Over residues 64–80 (EKVHSDNGKGEGEEVGH) the composition is skewed to basic and acidic residues.

This sequence belongs to the SNF5 family.

The protein resides in the nucleus. Part of the chromatin structure-remodeling complex (RSC) which is involved in transcription regulation and nucleosome positioning. RSC is responsible for the transfer of a histone octamer from a nucleosome core particle to naked DNA. The reaction requires ATP and involves an activated RSC-nucleosome intermediate. Remodeling reaction also involves DNA translocation, DNA twist and conformational change. As a reconfigurer of centromeric and flanking nucleosomes, RSC complex is required both for proper kinetochore function in chromosome segregation and, via a PKC1-dependent signaling pathway, for organization of the cellular cytoskeleton. This subunit is essential for mitotic growth and required for cell cycle progression. This chain is Chromatin structure-remodeling complex subunit SFH1 (SFH1), found in Eremothecium gossypii (strain ATCC 10895 / CBS 109.51 / FGSC 9923 / NRRL Y-1056) (Yeast).